The primary structure comprises 389 residues: PqqA peptide cyclase (389 aa).

Positions 19-234 (VGLPLWLLAE…TNEYRARLEA (216 aa)) constitute a Radical SAM core domain. The [4Fe-4S] cluster site is built by C33, C37, and C40.

The protein belongs to the radical SAM superfamily. PqqE family. In terms of assembly, interacts with PqqD. The interaction is necessary for activity of PqqE. It depends on [4Fe-4S] cluster as a cofactor.

The enzyme catalyses [PQQ precursor protein] + S-adenosyl-L-methionine = E-Y cross-linked-[PQQ precursor protein] + 5'-deoxyadenosine + L-methionine + H(+). It participates in cofactor biosynthesis; pyrroloquinoline quinone biosynthesis. Catalyzes the cross-linking of a glutamate residue and a tyrosine residue in the PqqA protein as part of the biosynthesis of pyrroloquinoline quinone (PQQ). The sequence is that of PqqA peptide cyclase from Pseudomonas syringae pv. syringae (strain B728a).